A 589-amino-acid polypeptide reads, in one-letter code: MGDVLISDRPPSPARLSHTSEKHPRVTLTELNVLRRHRELCDVVINVSGRKIFAHRVILSACSPYFRAMFTGELEESRQTEVTIRDIDENAMELLIDFCYTSHIVVEESNVQTLLPAACLLQLAEIQDICCEFLKRQLDPTNCLGIRAFADTHSCRELLRIADKFTQHNFQEVMESEEFLLLPVGQLVDIICSDELNVRSEEQVFNAVMAWLKYNVAERRQHLAQVLQHVRMPLLSPKFLVGTVGSDLLVRSDEACRDLVDEAKNYLLLPQERPLMQGPRTRPRKPTRRGEVLFAVGGWCSGDAIASVERFDPETADWKMVAPMSKRRCGVGVAVLNDLLYAVGGHDGQSYLNSIERYDPQTNQWSCDVAPTTSCRTSVGVAVLDGFLYAVGGQDGVQCLNHVERYDPKENKWSKVAPMTTRRLGVAVAVLGGYLYAIGGSDGQCPLNTVERYDPRQNKWCAVSPMSTRRKHLGCAVFNNFIYAVGGRDDCMELSSAERYNPHTNSWSPIVAMTSRRSGVGLAVVNGQLYAVGGFDGTAYLKTIEVYDPETNQWRLCGCMNYRRLGGGVGVMRAPQTENYMWIRKDSVV.

The tract at residues 1-22 is disordered; that stretch reads MGDVLISDRPPSPARLSHTSEK. The region spanning 41–108 is the BTB domain; that stretch reads CDVVINVSGR…CYTSHIVVEE (68 aa). The 103-residue stretch at 143–245 folds into the BACK domain; it reads CLGIRAFADT…SPKFLVGTVG (103 aa). 6 Kelch repeats span residues 292-338, 340-386, 387-433, 435-480, 482-527, and 528-574; these read VLFA…VLND, LYAV…VLDG, FLYA…VLGG, LYAI…VFNN, IYAV…VVNG, and QLYA…VMRA.

Its pathway is protein modification; protein ubiquitination. Its function is as follows. Probable substrate-specific adapter of an E3 ubiquitin-protein ligase complex which mediates the ubiquitination and subsequent proteasomal degradation of target proteins. May have a role in synapse differentiation and growth. This is Kelch-like protein diablo from Aedes aegypti (Yellowfever mosquito).